The chain runs to 95 residues: Large ribosomal subunit protein bL25 (95 aa).

It belongs to the bacterial ribosomal protein bL25 family. In terms of assembly, part of the 50S ribosomal subunit; part of the 5S rRNA/L5/L18/L25 subcomplex. Contacts the 5S rRNA. Binds to the 5S rRNA independently of L5 and L18.

In terms of biological role, this is one of the proteins that binds to the 5S RNA in the ribosome where it forms part of the central protuberance. This Shewanella sp. (strain ANA-3) protein is Large ribosomal subunit protein bL25.